Here is a 95-residue protein sequence, read N- to C-terminus: Aspartyl/glutamyl-tRNA(Asn/Gln) amidotransferase subunit C (95 aa).

This sequence belongs to the GatC family. As to quaternary structure, heterotrimer of A, B and C subunits.

It carries out the reaction L-glutamyl-tRNA(Gln) + L-glutamine + ATP + H2O = L-glutaminyl-tRNA(Gln) + L-glutamate + ADP + phosphate + H(+). It catalyses the reaction L-aspartyl-tRNA(Asn) + L-glutamine + ATP + H2O = L-asparaginyl-tRNA(Asn) + L-glutamate + ADP + phosphate + 2 H(+). Functionally, allows the formation of correctly charged Asn-tRNA(Asn) or Gln-tRNA(Gln) through the transamidation of misacylated Asp-tRNA(Asn) or Glu-tRNA(Gln) in organisms which lack either or both of asparaginyl-tRNA or glutaminyl-tRNA synthetases. The reaction takes place in the presence of glutamine and ATP through an activated phospho-Asp-tRNA(Asn) or phospho-Glu-tRNA(Gln). In Beijerinckia indica subsp. indica (strain ATCC 9039 / DSM 1715 / NCIMB 8712), this protein is Aspartyl/glutamyl-tRNA(Asn/Gln) amidotransferase subunit C.